Here is a 110-residue protein sequence, read N- to C-terminus: Large ribosomal subunit protein uL24 (110 aa).

Belongs to the universal ribosomal protein uL24 family. As to quaternary structure, part of the 50S ribosomal subunit.

One of two assembly initiator proteins, it binds directly to the 5'-end of the 23S rRNA, where it nucleates assembly of the 50S subunit. In terms of biological role, one of the proteins that surrounds the polypeptide exit tunnel on the outside of the subunit. The chain is Large ribosomal subunit protein uL24 from Frankia alni (strain DSM 45986 / CECT 9034 / ACN14a).